Here is a 652-residue protein sequence, read N- to C-terminus: UvrABC system protein C (652 aa).

In terms of domain architecture, GIY-YIG spans 19–96 (KTSGVYLWKD…IKKHKPRYNI (78 aa)). In terms of domain architecture, UVR spans 203–238 (EDVSGTLKEKMKEAAEKKEFEKAARLRDGIQAVYAL).

The protein belongs to the UvrC family. As to quaternary structure, interacts with UvrB in an incision complex.

It is found in the cytoplasm. The UvrABC repair system catalyzes the recognition and processing of DNA lesions. UvrC both incises the 5' and 3' sides of the lesion. The N-terminal half is responsible for the 3' incision and the C-terminal half is responsible for the 5' incision. In Treponema denticola (strain ATCC 35405 / DSM 14222 / CIP 103919 / JCM 8153 / KCTC 15104), this protein is UvrABC system protein C.